We begin with the raw amino-acid sequence, 436 residues long: Chromosomal replication initiator protein DnaA (436 aa).

Residues 1-69 are domain I, interacts with DnaA modulators; the sequence is MSIFTKIKKS…SELYEKETGI (69 aa). Positions 69–97 are domain II; sequence IKPKIDIVTKEISHRPLTIEEIIEPTTPS. Residues 98-311 form a domain III, AAA+ region region; the sequence is VLIPEYTFES…GMITKINAMS (214 aa). 4 residues coordinate ATP: Gly-142, Gly-144, Lys-145, and Thr-146. The segment at 312–436 is domain IV, binds dsDNA; that stretch reads KILGISEITL…KNKIQIKKSE (125 aa).

The protein belongs to the DnaA family. As to quaternary structure, oligomerizes as a right-handed, spiral filament on DNA at oriC.

Its subcellular location is the cytoplasm. Its function is as follows. Plays an essential role in the initiation and regulation of chromosomal replication. ATP-DnaA binds to the origin of replication (oriC) to initiate formation of the DNA replication initiation complex once per cell cycle. Binds the DnaA box (a 9 base pair repeat at the origin) and separates the double-stranded (ds)DNA. Forms a right-handed helical filament on oriC DNA; dsDNA binds to the exterior of the filament while single-stranded (ss)DNA is stabiized in the filament's interior. The ATP-DnaA-oriC complex binds and stabilizes one strand of the AT-rich DNA unwinding element (DUE), permitting loading of DNA polymerase. After initiation quickly degrades to an ADP-DnaA complex that is not apt for DNA replication. Binds acidic phospholipids. This Nautilia profundicola (strain ATCC BAA-1463 / DSM 18972 / AmH) protein is Chromosomal replication initiator protein DnaA.